The primary structure comprises 113 residues: Large ribosomal subunit protein uL18 (113 aa).

This sequence belongs to the universal ribosomal protein uL18 family. As to quaternary structure, part of the 50S ribosomal subunit; part of the 5S rRNA/L5/L18/L25 subcomplex. Contacts the 5S and 23S rRNAs.

Its function is as follows. This is one of the proteins that bind and probably mediate the attachment of the 5S RNA into the large ribosomal subunit, where it forms part of the central protuberance. This is Large ribosomal subunit protein uL18 from Phocaeicola vulgatus (strain ATCC 8482 / DSM 1447 / JCM 5826 / CCUG 4940 / NBRC 14291 / NCTC 11154) (Bacteroides vulgatus).